Reading from the N-terminus, the 455-residue chain is Glycylpeptide N-tetradecanoyltransferase (455 aa).

38–41 is a tetradecanoyl-CoA binding site; that stretch reads HKFW. The interval 168–204 is myristoyl CoA-binding; it reads INFLCVHKQLRSKRLTPVLIKEITRRVNKCDIWHALY. Leucine 455 serves as the catalytic Proton acceptor; via carboxylate.

Belongs to the NMT family. In terms of assembly, monomer. The N-terminus is blocked.

The protein localises to the cytoplasm. It carries out the reaction N-terminal glycyl-[protein] + tetradecanoyl-CoA = N-tetradecanoylglycyl-[protein] + CoA + H(+). Inhibited by diethylpyrocarbonate. Competitively inhibited by S-(2-oxo)pentadecyl-CoA, a non hydrolysable myristoyl-CoA analog, and by SC-58272, a peptidomimetic derived from the N-terminal sequence of a natural substrate. Functionally, adds a myristoyl group to the N-terminal glycine residue of certain cellular proteins. Substrate specificity requires an N-terminal glycine in the nascent polypeptide substrates. Uncharged amino acids are preferred at position 2 while neutral residues are favored at positions 3 and 4. Ser is present at position 5 in almost all known N-myristoyl proteins and Lys is commonly encountered at postion 6. The chain is Glycylpeptide N-tetradecanoyltransferase (NMT1) from Saccharomyces cerevisiae (strain ATCC 204508 / S288c) (Baker's yeast).